The chain runs to 471 residues: MSPEMGELTQTRLQKIWIPHSSGSSRLQRRRGSSIPQFTNSPTMVIMVGLPARGKTYISTKLTRYLNWIGTPTKVFNLGQYRREAVSYKNYEFFLPDNMEALQIRKQCALAALKDVHNYLSHEEGHVAVFDATNTTRERRSLILQFAKEHGYKVFFIESICNDPGIIAENIRQVKLGSPDYIDCDREKVLEDFLKRIECYEVNYQPLDEELDSHLSYIKIFDVGTRYMVNRVQDHIQSRTVYYLMNIHVTPRSIYLCRHGESELNIRGRIGGDSGLSVRGKQYAYALANFIQSQGISSLKVWTSHMKRTIQTAEALGVPYEQWKALNEIDAGVCEEMTYEEIQEHYPEEFALRDQDKYRYRYPKGESYEDLVQRLEPVIMELERQENVLVICHQAVMRCLLAYFLDKSSDELPYLKCPLHTVLKLTPVAYGCKVESIYLNVEAVNTHREKPENVDITREPEEALDTVPAHY.

Ser-2 carries the N-acetylserine modification. A 6-phosphofructo-2-kinase region spans residues 2 to 250 (SPEMGELTQT…VYYLMNIHVT (249 aa)). Position 33 is a phosphoserine; by PKA (Ser-33). An ATP-binding site is contributed by 49–57 (GLPARGKTY). The beta-D-fructose 6-phosphate site is built by Arg-82 and Arg-105. The active site involves Asp-131. Beta-D-fructose 6-phosphate-binding residues include Thr-133 and Arg-139. Residue Ser-141 is modified to Phosphoserine. The active site involves Cys-161. 170–175 (NIRQVK) lines the ATP pocket. Lys-175, Arg-196, and Tyr-200 together coordinate beta-D-fructose 6-phosphate. Residues 251 to 471 (PRSIYLCRHG…EALDTVPAHY (221 aa)) are fructose-2,6-bisphosphatase. Arg-258 contacts beta-D-fructose 2,6-bisphosphate. His-259 serves as the catalytic Tele-phosphohistidine intermediate. Positions 265, 271, and 308 each coordinate beta-D-fructose 2,6-bisphosphate. Glu-328 (proton donor/acceptor) is an active-site residue. Beta-D-fructose 2,6-bisphosphate-binding residues include Tyr-339, Arg-353, Lys-357, Tyr-368, Gln-394, and Arg-398. ATP is bound at residue 350–353 (FALR). ATP-binding positions include 394–398 (QAVMR) and Tyr-430.

In the C-terminal section; belongs to the phosphoglycerate mutase family. As to quaternary structure, homodimer. In terms of tissue distribution, liver.

It carries out the reaction beta-D-fructose 2,6-bisphosphate + H2O = beta-D-fructose 6-phosphate + phosphate. It catalyses the reaction beta-D-fructose 6-phosphate + ATP = beta-D-fructose 2,6-bisphosphate + ADP + H(+). Phosphorylation at Ser-33 inhibits the kinase and activates the bisphosphatase. Functionally, synthesis and degradation of fructose 2,6-bisphosphate. The polypeptide is 6-phosphofructo-2-kinase/fructose-2,6-bisphosphatase 1 (Homo sapiens (Human)).